The chain runs to 235 residues: Aspartate/glutamate leucyltransferase (235 aa).

It belongs to the R-transferase family. Bpt subfamily.

The protein localises to the cytoplasm. The enzyme catalyses N-terminal L-glutamyl-[protein] + L-leucyl-tRNA(Leu) = N-terminal L-leucyl-L-glutamyl-[protein] + tRNA(Leu) + H(+). The catalysed reaction is N-terminal L-aspartyl-[protein] + L-leucyl-tRNA(Leu) = N-terminal L-leucyl-L-aspartyl-[protein] + tRNA(Leu) + H(+). In terms of biological role, functions in the N-end rule pathway of protein degradation where it conjugates Leu from its aminoacyl-tRNA to the N-termini of proteins containing an N-terminal aspartate or glutamate. The chain is Aspartate/glutamate leucyltransferase from Shewanella putrefaciens (strain CN-32 / ATCC BAA-453).